A 299-amino-acid chain; its full sequence is Pyridoxal 5'-phosphate synthase subunit PdxS (299 aa).

D24 is a D-ribose 5-phosphate binding site. Catalysis depends on K81, which acts as the Schiff-base intermediate with D-ribose 5-phosphate. G153 contacts D-ribose 5-phosphate. R165 is a binding site for D-glyceraldehyde 3-phosphate. Residues G219 and 240-241 (GS) contribute to the D-ribose 5-phosphate site.

The protein belongs to the PdxS/SNZ family. As to quaternary structure, in the presence of PdxT, forms a dodecamer of heterodimers.

It catalyses the reaction aldehydo-D-ribose 5-phosphate + D-glyceraldehyde 3-phosphate + L-glutamine = pyridoxal 5'-phosphate + L-glutamate + phosphate + 3 H2O + H(+). It participates in cofactor biosynthesis; pyridoxal 5'-phosphate biosynthesis. In terms of biological role, catalyzes the formation of pyridoxal 5'-phosphate from ribose 5-phosphate (RBP), glyceraldehyde 3-phosphate (G3P) and ammonia. The ammonia is provided by the PdxT subunit. Can also use ribulose 5-phosphate and dihydroxyacetone phosphate as substrates, resulting from enzyme-catalyzed isomerization of RBP and G3P, respectively. This chain is Pyridoxal 5'-phosphate synthase subunit PdxS, found in Methanococcus maripaludis (strain C5 / ATCC BAA-1333).